Reading from the N-terminus, the 133-residue chain is Holo-[acyl-carrier-protein] synthase (133 aa).

Mg(2+) is bound by residues Asp8 and Glu58.

The protein belongs to the P-Pant transferase superfamily. AcpS family. Requires Mg(2+) as cofactor.

Its subcellular location is the cytoplasm. The catalysed reaction is apo-[ACP] + CoA = holo-[ACP] + adenosine 3',5'-bisphosphate + H(+). In terms of biological role, transfers the 4'-phosphopantetheine moiety from coenzyme A to a Ser of acyl-carrier-protein. In Erythrobacter litoralis (strain HTCC2594), this protein is Holo-[acyl-carrier-protein] synthase.